A 473-amino-acid chain; its full sequence is MKTLYSPRRFYPVETLFNGTLALAGRDQETTGFAWWAGNARLINLSGKLLGAHVAHAGLIVFWAGAMNLFEVAHFVPEKPMYEQGLILLPHLATLGWGIGPGGEVIDTFPYFVSGVLHLISSAVLGFGGIYHSLLGPETLEESFPFFGYVWKDRNKMTTILGIHLILLGIGAFLLVLKALYFGGVYDTWAPGGGDVRKISNLTLSPSIIFGYLLKSPFGGEGWIVSVDDLEDIIGGHVWLGSICIFGGIWHILTKPFAWARRALVWSGEAYLSYSLAALSVFGFTACCFVWFNNTAYPSEFYGPTGPEASQAQAFTFLVRDQRLGANVGSAQGPTGLGKYLMRSPTGEVIFGGETMRFWDLRAPWLEPLRGPNGLDLSRLKKDIQPWQERRSAEYMTHAPLGSLNSVGGVATEINAVNYVSPRSWLSTSHFVLGFFLFVGHLWHAGRARAAAAGFEKGIDRDLEPVLFMTPLN.

Positions 1-14 (MKTLYSPRRFYPVE) are excised as a propeptide. Thr-15 is modified (N-acetylthreonine). The residue at position 15 (Thr-15) is a Phosphothreonine. A run of 5 helical transmembrane segments spans residues 69–93 (LFEV…PHLA), 134–155 (LLGP…KDRN), 178–200 (KALY…RKIS), 255–275 (KPFA…LSYS), and 291–312 (WFNN…ASQA). Glu-367 contacts [CaMn4O5] cluster. The helical transmembrane segment at 447 to 471 (RARAAAAGFEKGIDRDLEPVLFMTP) threads the bilayer.

The protein belongs to the PsbB/PsbC family. PsbC subfamily. In terms of assembly, PSII is composed of 1 copy each of membrane proteins PsbA, PsbB, PsbC, PsbD, PsbE, PsbF, PsbH, PsbI, PsbJ, PsbK, PsbL, PsbM, PsbT, PsbX, PsbY, PsbZ, Psb30/Ycf12, at least 3 peripheral proteins of the oxygen-evolving complex and a large number of cofactors. It forms dimeric complexes. It depends on Binds multiple chlorophylls and provides some of the ligands for the Ca-4Mn-5O cluster of the oxygen-evolving complex. It may also provide a ligand for a Cl- that is required for oxygen evolution. PSII binds additional chlorophylls, carotenoids and specific lipids. as a cofactor.

It is found in the plastid. It localises to the chloroplast thylakoid membrane. Its function is as follows. One of the components of the core complex of photosystem II (PSII). It binds chlorophyll and helps catalyze the primary light-induced photochemical processes of PSII. PSII is a light-driven water:plastoquinone oxidoreductase, using light energy to abstract electrons from H(2)O, generating O(2) and a proton gradient subsequently used for ATP formation. The chain is Photosystem II CP43 reaction center protein from Ranunculus macranthus (Large buttercup).